Consider the following 495-residue polypeptide: UDP-N-acetylmuramoyl-L-alanyl-D-glutamate--2,6-diaminopimelate ligase (495 aa).

UDP-N-acetyl-alpha-D-muramoyl-L-alanyl-D-glutamate is bound by residues Leu27, Ser29, and 44–46 (HQA). ATP is bound at residue 116-122 (GTNGKTT). UDP-N-acetyl-alpha-D-muramoyl-L-alanyl-D-glutamate contacts are provided by residues Asn157, 158–159 (TT), Ser185, Gln191, and Arg193. An N6-carboxylysine modification is found at Lys225. Meso-2,6-diaminopimelate is bound by residues Arg390, 414–417 (DNPR), Gly465, and Glu469. The Meso-diaminopimelate recognition motif motif lies at 414 to 417 (DNPR).

Belongs to the MurCDEF family. MurE subfamily. Requires Mg(2+) as cofactor. Post-translationally, carboxylation is probably crucial for Mg(2+) binding and, consequently, for the gamma-phosphate positioning of ATP.

Its subcellular location is the cytoplasm. The catalysed reaction is UDP-N-acetyl-alpha-D-muramoyl-L-alanyl-D-glutamate + meso-2,6-diaminopimelate + ATP = UDP-N-acetyl-alpha-D-muramoyl-L-alanyl-gamma-D-glutamyl-meso-2,6-diaminopimelate + ADP + phosphate + H(+). Its pathway is cell wall biogenesis; peptidoglycan biosynthesis. Its function is as follows. Catalyzes the addition of meso-diaminopimelic acid to the nucleotide precursor UDP-N-acetylmuramoyl-L-alanyl-D-glutamate (UMAG) in the biosynthesis of bacterial cell-wall peptidoglycan. The protein is UDP-N-acetylmuramoyl-L-alanyl-D-glutamate--2,6-diaminopimelate ligase of Salmonella choleraesuis (strain SC-B67).